A 208-amino-acid polypeptide reads, in one-letter code: Outer-membrane lipoprotein carrier protein (208 aa).

A signal peptide spans 1–22 (MKNLLCAVMLTSPLLYSTAVFA).

The protein belongs to the LolA family. In terms of assembly, monomer.

It localises to the periplasm. Its function is as follows. Participates in the translocation of lipoproteins from the inner membrane to the outer membrane. Only forms a complex with a lipoprotein if the residue after the N-terminal Cys is not an aspartate (The Asp acts as a targeting signal to indicate that the lipoprotein should stay in the inner membrane). This is Outer-membrane lipoprotein carrier protein from Shewanella sp. (strain W3-18-1).